We begin with the raw amino-acid sequence, 1023 residues long: Rho GTPase-activating protein 11A (1023 aa).

The 191-residue stretch at 49–239 (VPFNALPHSA…TLIDYASDIG (191 aa)) folds into the Rho-GAP domain. Position 285 is a phosphoserine (Ser-285). At Thr-306 the chain carries Phosphothreonine. Residues Ser-316 and Ser-318 each carry the phosphoserine modification. A Phosphothreonine modification is found at Thr-323. Phosphoserine occurs at positions 339, 340, and 484. Thr-508 is subject to Phosphothreonine. A disordered region spans residues 567 to 589 (TPSNLNNKHNSNITSSPLSGDEN). Phosphoserine occurs at positions 582, 585, 638, and 675. The tract at residues 714–734 (KQEFSSDEEIKKQQSPKDKLN) is disordered. Positions 721 to 734 (EEIKKQQSPKDKLN) are enriched in basic and acidic residues. Ser-847 is subject to Phosphoserine. The residue at position 866 (Thr-866) is a Phosphothreonine. Ser-868 carries the phosphoserine modification. Positions 999-1023 (AWYKGSPKHPIGKTQLLPTSKPVDL) are disordered.

It is found in the nucleus. GTPase activator for the Rho-type GTPases by converting them to an inactive GDP-bound state. The chain is Rho GTPase-activating protein 11A from Homo sapiens (Human).